A 259-amino-acid polypeptide reads, in one-letter code: Flap endonuclease Xni (259 aa).

Residue Asp109 coordinates Mg(2+). Positions 165–255 (VTPAQLTDYW…FNLQDIRFNS (91 aa)) constitute a 5'-3' exonuclease domain. K(+) contacts are provided by Leu176, Pro185, Val187, and Ile190. An interaction with DNA region spans residues 189 to 194 (GIGPKA).

Belongs to the Xni family. Requires Mg(2+) as cofactor. K(+) serves as cofactor.

In terms of biological role, has flap endonuclease activity. During DNA replication, flap endonucleases cleave the 5'-overhanging flap structure that is generated by displacement synthesis when DNA polymerase encounters the 5'-end of a downstream Okazaki fragment. This chain is Flap endonuclease Xni, found in Vibrio cholerae serotype O1 (strain ATCC 39315 / El Tor Inaba N16961).